The primary structure comprises 813 residues: Valine--tRNA ligase (813 aa).

The short motif at 46 to 56 is the 'HIGH' region element; it reads PTVSGQLHIGH. The 'KMSKS' region signature appears at 536–540; that stretch reads KMSKS. K539 serves as a coordination point for ATP.

It belongs to the class-I aminoacyl-tRNA synthetase family. ValS type 2 subfamily. As to quaternary structure, monomer.

The protein resides in the cytoplasm. It carries out the reaction tRNA(Val) + L-valine + ATP = L-valyl-tRNA(Val) + AMP + diphosphate. Catalyzes the attachment of valine to tRNA(Val). As ValRS can inadvertently accommodate and process structurally similar amino acids such as threonine, to avoid such errors, it has a 'posttransfer' editing activity that hydrolyzes mischarged Thr-tRNA(Val) in a tRNA-dependent manner. The sequence is that of Valine--tRNA ligase from Rickettsia canadensis (strain McKiel).